The chain runs to 245 residues: 4-hydroxy-tetrahydrodipicolinate reductase (245 aa).

NAD(+) is bound by residues 7 to 12, 75 to 77, and 102 to 105; these read GAKGKV, GTT, and APNF. H132 serves as the catalytic Proton donor/acceptor. H133 contributes to the (S)-2,3,4,5-tetrahydrodipicolinate binding site. The active-site Proton donor is the K136. A (S)-2,3,4,5-tetrahydrodipicolinate-binding site is contributed by 142–143; that stretch reads GT.

Belongs to the DapB family.

The protein localises to the cytoplasm. It carries out the reaction (S)-2,3,4,5-tetrahydrodipicolinate + NAD(+) + H2O = (2S,4S)-4-hydroxy-2,3,4,5-tetrahydrodipicolinate + NADH + H(+). The enzyme catalyses (S)-2,3,4,5-tetrahydrodipicolinate + NADP(+) + H2O = (2S,4S)-4-hydroxy-2,3,4,5-tetrahydrodipicolinate + NADPH + H(+). It participates in amino-acid biosynthesis; L-lysine biosynthesis via DAP pathway; (S)-tetrahydrodipicolinate from L-aspartate: step 4/4. Functionally, catalyzes the conversion of 4-hydroxy-tetrahydrodipicolinate (HTPA) to tetrahydrodipicolinate. The chain is 4-hydroxy-tetrahydrodipicolinate reductase from Mycobacterium sp. (strain KMS).